A 716-amino-acid chain; its full sequence is Inhibitor of nuclear factor kappa-B kinase subunit epsilon (716 aa).

The Protein kinase domain occupies 9–315 (WHTDDLLGQG…LQRVVVHVFS (307 aa)). ATP is bound at residue 15–23 (LGQGATASV). Lys30 is covalently cross-linked (Glycyl lysine isopeptide (Lys-Gly) (interchain with G-Cter in ubiquitin)). Lys38 is an ATP binding site. Asp135 (proton acceptor) is an active-site residue. Ser172 carries the post-translational modification Phosphoserine; by autocatalysis and IKKB. Lys231 participates in a covalent cross-link: Glycyl lysine isopeptide (Lys-Gly) (interchain with G-Cter in SUMO1). The interaction with DDX3X stretch occupies residues 383 to 647 (STAIPKGLAF…VQESLSKLLE (265 aa)). A Glycyl lysine isopeptide (Lys-Gly) (interchain with G-Cter in ubiquitin) cross-link involves residue Lys401. The tract at residues 436–457 (QELMFRGLHWVMEVLQATCRRT) is leucine-zipper. The residue at position 501 (Thr501) is a Phosphothreonine. Position 664 is a phosphoserine (Ser664).

Belongs to the protein kinase superfamily. Ser/Thr protein kinase family. I-kappa-B kinase subfamily. In terms of assembly, homodimer. Interacts with MAVS/IPS1. Interacts (via protein kinase domain) with TTLL12 (via N-terminus); the interaction prevents MAVS binding to IKBKE. Interacts with the adapter proteins AZI2/NAP1, TANK and TBKBP1/SINTBAD. Interacts with SIKE1. Interacts with TICAM1/TRIF, IRF3 and RIGI; interactions are disrupted by the interaction between IKBKE and SIKE1. Interacts with TOPORS; induced by DNA damage. Interacts with CYLD. Interacts (when polyubiquitinated) with IKBKB, IKBKG and MYD88. Interacts with IFIH1. Interacts with DDX3X; the interaction may be induced upon virus infection. Interacts with TRIM6 (via SPRY box). Interacts with unanchored K48-linked polyubiquitin chains; this leads to IKBKE activation. Interacts with TBK1. Interacts with FKBP5. (Microbial infection) Interacts (via Protein kinase domain) with arenavirus protein N; the interaction inhibits IKBKE kinase function. As to quaternary structure, (Microbial infection) Interacts with Ebola virus protein VP35; the interaction leads to inhibition of cellular antiviral response by blocking necessary interactions between the IKBKE and MAVS/IPS as well as its substrates IRF3 and IRF7. In terms of assembly, (Microbial infection) Interacts with Severe fever with thrombocytopenia virus (SFTSV) NSs; this interaction this interaction sequesters IKBKE in NSs-induced cytoplasmic inclusion bodies thereby inhibiting the IFN responses. (Microbial infection) Interacts with human T-cell leukemia virus 1/HTLV-1 protein HBZ. As to quaternary structure, (Microbial infection) Interacts with Epstein-Barr virus (EBV) protein NEC2/BFRF1; this interaction inhibits IKBKE kinase activity and IRF3 nuclear translocation. Post-translationally, autophosphorylated and phosphorylated by IKBKB/IKKB. Phosphorylation at Ser-172 is enhanced by the interaction with DDX3X. Phosphorylated at Thr-501 upon IFN activation. In terms of processing, sumoylation by TOPORS upon DNA damage is required for protection of cells against DNA damage-induced cell death. Desumoylated by SENP1. 'Lys-63'-linked polyubiquitinated at Lys-30 and Lys-401 by TRAF2:BIRC2 and TRAF2:BIRC3 complexes. Ubiquitination is induced by LPS, TNFA and interleukin-1 and required for full kinase activity and KF-kappa-B pathway activation. As to expression, highly expressed in spleen followed by thymus, peripheral blood leukocytes, pancreas, placenta. Weakly expressed in lung, kidney, prostate, ovary and colon.

The protein localises to the cytoplasm. It localises to the nucleus. It is found in the PML body. It carries out the reaction L-seryl-[I-kappa-B protein] + ATP = O-phospho-L-seryl-[I-kappa-B protein] + ADP + H(+). Its function is as follows. Serine/threonine kinase that plays an essential role in regulating inflammatory responses to viral infection, through the activation of the type I IFN, NF-kappa-B and STAT signaling. Also involved in TNFA and inflammatory cytokines, like Interleukin-1, signaling. Following activation of viral RNA sensors, such as RIG-I-like receptors, associates with DDX3X and phosphorylates interferon regulatory factors (IRFs), IRF3 and IRF7, as well as DDX3X. This activity allows subsequent homodimerization and nuclear translocation of the IRF3 leading to transcriptional activation of pro-inflammatory and antiviral genes including IFNB. In order to establish such an antiviral state, IKBKE forms several different complexes whose composition depends on the type of cell and cellular stimuli. Thus, several scaffolding molecules including IPS1/MAVS, TANK, AZI2/NAP1 or TBKBP1/SINTBAD can be recruited to the IKBKE-containing-complexes. Activated by polyubiquitination in response to TNFA and interleukin-1, regulates the NF-kappa-B signaling pathway through, at least, the phosphorylation of CYLD. Phosphorylates inhibitors of NF-kappa-B thus leading to the dissociation of the inhibitor/NF-kappa-B complex and ultimately the degradation of the inhibitor. In addition, is also required for the induction of a subset of ISGs which displays antiviral activity, may be through the phosphorylation of STAT1 at 'Ser-708'. Phosphorylation of STAT1 at 'Ser-708' also seems to promote the assembly and DNA binding of ISGF3 (STAT1:STAT2:IRF9) complexes compared to GAF (STAT1:STAT1) complexes, in this way regulating the balance between type I and type II IFN responses. Protects cells against DNA damage-induced cell death. Also plays an important role in energy balance regulation by sustaining a state of chronic, low-grade inflammation in obesity, wich leads to a negative impact on insulin sensitivity. Phosphorylates AKT1. This is Inhibitor of nuclear factor kappa-B kinase subunit epsilon (IKBKE) from Homo sapiens (Human).